Reading from the N-terminus, the 418-residue chain is Protein YdhQ (418 aa).

This chain is Protein YdhQ (ydhQ), found in Escherichia coli (strain K12).